A 432-amino-acid chain; its full sequence is Enolase 1 (432 aa).

A (2R)-2-phosphoglycerate-binding site is contributed by glutamine 163. The active-site Proton donor is the glutamate 205. Mg(2+) is bound by residues aspartate 242, glutamate 287, and aspartate 314. Positions 339, 368, 369, and 390 each coordinate (2R)-2-phosphoglycerate. The Proton acceptor role is filled by lysine 339.

It belongs to the enolase family. Requires Mg(2+) as cofactor.

It localises to the cytoplasm. The protein localises to the secreted. The protein resides in the cell surface. The catalysed reaction is (2R)-2-phosphoglycerate = phosphoenolpyruvate + H2O. It participates in carbohydrate degradation; glycolysis; pyruvate from D-glyceraldehyde 3-phosphate: step 4/5. Functionally, catalyzes the reversible conversion of 2-phosphoglycerate (2-PG) into phosphoenolpyruvate (PEP). It is essential for the degradation of carbohydrates via glycolysis. This is Enolase 1 from Lactobacillus johnsonii (strain CNCM I-12250 / La1 / NCC 533).